The chain runs to 309 residues: Malate dehydrogenase (309 aa).

Residues 9 to 14 (GAGAVG) and D33 contribute to the NAD(+) site. Substrate contacts are provided by R82 and R88. NAD(+)-binding positions include N95 and 118–120 (VTN). The substrate site is built by N120 and R151. H175 serves as the catalytic Proton acceptor.

Belongs to the LDH/MDH superfamily. MDH type 3 family.

It carries out the reaction (S)-malate + NAD(+) = oxaloacetate + NADH + H(+). Catalyzes the reversible oxidation of malate to oxaloacetate. This chain is Malate dehydrogenase, found in Thermomicrobium roseum (strain ATCC 27502 / DSM 5159 / P-2).